The sequence spans 81 residues: Tissue- and phase-specific nuclear protein (81 aa).

In terms of tissue distribution, expressed in oviduct, where expression levels are higher in uterine sections than in tuba sections. No expression detected in small intestine and liver (at protein level).

It localises to the nucleus. This is Tissue- and phase-specific nuclear protein from Podarcis siculus (Italian wall lizard).